A 631-amino-acid polypeptide reads, in one-letter code: Phosphomethylpyrimidine synthase (631 aa).

Substrate contacts are provided by residues asparagine 239, methionine 268, tyrosine 297, histidine 333, 353–355 (SRG), 394–397 (DGLR), and glutamate 433. Residue histidine 437 coordinates Zn(2+). Position 460 (tyrosine 460) interacts with substrate. Histidine 501 contacts Zn(2+). [4Fe-4S] cluster-binding residues include cysteine 581, cysteine 584, and cysteine 589.

This sequence belongs to the ThiC family. As to quaternary structure, homodimer. Requires [4Fe-4S] cluster as cofactor.

The catalysed reaction is 5-amino-1-(5-phospho-beta-D-ribosyl)imidazole + S-adenosyl-L-methionine = 4-amino-2-methyl-5-(phosphooxymethyl)pyrimidine + CO + 5'-deoxyadenosine + formate + L-methionine + 3 H(+). It functions in the pathway cofactor biosynthesis; thiamine diphosphate biosynthesis. Functionally, catalyzes the synthesis of the hydroxymethylpyrimidine phosphate (HMP-P) moiety of thiamine from aminoimidazole ribotide (AIR) in a radical S-adenosyl-L-methionine (SAM)-dependent reaction. The chain is Phosphomethylpyrimidine synthase from Escherichia coli (strain 55989 / EAEC).